The following is an 80-amino-acid chain: Acyl carrier protein (80 aa).

The Carrier domain maps to 4–79 (EAILEKVRSI…DAVKYIEDKQ (76 aa)). Ser-39 carries the O-(pantetheine 4'-phosphoryl)serine modification.

This sequence belongs to the acyl carrier protein (ACP) family. 4'-phosphopantetheine is transferred from CoA to a specific serine of apo-ACP by AcpS. This modification is essential for activity because fatty acids are bound in thioester linkage to the sulfhydryl of the prosthetic group.

Its subcellular location is the cytoplasm. It participates in lipid metabolism; fatty acid biosynthesis. Carrier of the growing fatty acid chain in fatty acid biosynthesis. This chain is Acyl carrier protein, found in Parasynechococcus marenigrum (strain WH8102).